Here is a 315-residue protein sequence, read N- to C-terminus: DNA-directed RNA polymerase subunit alpha (315 aa).

Residues 1–228 form an alpha N-terminal domain (alpha-NTD) region; that stretch reads MLEIEKPIIE…EHFKLFMSLT (228 aa). Residues 245–315 are alpha C-terminal domain (alpha-CTD); it reads KEKVLEMTVE…LGLCLKLNDE (71 aa).

This sequence belongs to the RNA polymerase alpha chain family. In terms of assembly, homodimer. The RNAP catalytic core consists of 2 alpha, 1 beta, 1 beta' and 1 omega subunit. When a sigma factor is associated with the core the holoenzyme is formed, which can initiate transcription.

The enzyme catalyses RNA(n) + a ribonucleoside 5'-triphosphate = RNA(n+1) + diphosphate. In terms of biological role, DNA-dependent RNA polymerase catalyzes the transcription of DNA into RNA using the four ribonucleoside triphosphates as substrates. This Clostridium botulinum (strain Alaska E43 / Type E3) protein is DNA-directed RNA polymerase subunit alpha.